The following is a 273-amino-acid chain: Large ribosomal subunit protein uL2cz/uL2cy (273 aa).

The disordered stretch occupies residues Asn-224 to Lys-273. A compositionally biased stretch (basic and acidic residues) spans Lys-262 to Lys-273.

This sequence belongs to the universal ribosomal protein uL2 family. Part of the 50S ribosomal subunit.

The protein resides in the plastid. It localises to the chloroplast. The polypeptide is Large ribosomal subunit protein uL2cz/uL2cy (rpl2-A) (Piper cenocladum (Ant piper)).